Consider the following 119-residue polypeptide: Large ribosomal subunit protein bL20 (119 aa).

The protein belongs to the bacterial ribosomal protein bL20 family.

In terms of biological role, binds directly to 23S ribosomal RNA and is necessary for the in vitro assembly process of the 50S ribosomal subunit. It is not involved in the protein synthesizing functions of that subunit. In Geobacillus stearothermophilus (Bacillus stearothermophilus), this protein is Large ribosomal subunit protein bL20 (rplT).